The chain runs to 930 residues: Protein translocase subunit SecA (930 aa).

ATP-binding positions include glutamine 87, 105–109 (GEGKT), and aspartate 516. 4 residues coordinate Zn(2+): cysteine 914, cysteine 916, cysteine 925, and histidine 926.

This sequence belongs to the SecA family. Monomer and homodimer. Part of the essential Sec protein translocation apparatus which comprises SecA, SecYEG and auxiliary proteins SecDF-YajC and YidC. It depends on Zn(2+) as a cofactor.

It localises to the cell inner membrane. The protein localises to the cytoplasm. The enzyme catalyses ATP + H2O + cellular proteinSide 1 = ADP + phosphate + cellular proteinSide 2.. In terms of biological role, part of the Sec protein translocase complex. Interacts with the SecYEG preprotein conducting channel. Has a central role in coupling the hydrolysis of ATP to the transfer of proteins into and across the cell membrane, serving both as a receptor for the preprotein-SecB complex and as an ATP-driven molecular motor driving the stepwise translocation of polypeptide chains across the membrane. This is Protein translocase subunit SecA from Variovorax paradoxus (strain S110).